Consider the following 197-residue polypeptide: Imidazoleglycerol-phosphate dehydratase (197 aa).

This sequence belongs to the imidazoleglycerol-phosphate dehydratase family.

It is found in the cytoplasm. The enzyme catalyses D-erythro-1-(imidazol-4-yl)glycerol 3-phosphate = 3-(imidazol-4-yl)-2-oxopropyl phosphate + H2O. It functions in the pathway amino-acid biosynthesis; L-histidine biosynthesis; L-histidine from 5-phospho-alpha-D-ribose 1-diphosphate: step 6/9. The chain is Imidazoleglycerol-phosphate dehydratase from Rhodopseudomonas palustris (strain ATCC BAA-98 / CGA009).